The primary structure comprises 138 residues: Large ribosomal subunit protein uL16 (138 aa).

This sequence belongs to the universal ribosomal protein uL16 family. Part of the 50S ribosomal subunit.

Its function is as follows. Binds 23S rRNA and is also seen to make contacts with the A and possibly P site tRNAs. This chain is Large ribosomal subunit protein uL16, found in Mycoplasmoides gallisepticum (strain R(low / passage 15 / clone 2)) (Mycoplasma gallisepticum).